The following is a 206-amino-acid chain: Thymidylate kinase (206 aa).

10–17 (GNDGSGKS) provides a ligand contact to ATP.

Belongs to the thymidylate kinase family.

The catalysed reaction is dTMP + ATP = dTDP + ADP. Phosphorylation of dTMP to form dTDP in both de novo and salvage pathways of dTTP synthesis. The sequence is that of Thymidylate kinase from Caldicellulosiruptor saccharolyticus (strain ATCC 43494 / DSM 8903 / Tp8T 6331).